A 444-amino-acid polypeptide reads, in one-letter code: Transcription activator AKTR-3 (444 aa).

The zn(2)-C6 fungal-type DNA-binding region spans 16 to 43 (CDFCTQSKLRCNKNKPSCRRCTIQQQPC). Positions 49–89 (RRTGRPPKHPRTANDCQEANGQHGEQDPVTSTPGGSCQQQS) are disordered. Residues 50–59 (RTGRPPKHPR) show a composition bias toward basic residues. Positions 76–89 (PVTSTPGGSCQQQS) are enriched in polar residues.

The protein localises to the nucleus. Its function is as follows. Transcription factor that regulates the expression of the gene clusters that mediate the biosynthesis of the host-selective toxins (HSTs) AK-toxins responsible for Japanese pear black spot disease by the Japanese pear pathotype. AK-toxins are esters of 9,10-epoxy 8-hydroxy 9-methyldecatrienoic acid (EDA). On cellular level, AK-toxins affect plasma membrane of susceptible cells and cause a sudden increase in loss of K(+) after a few minutes of toxin treatment. This chain is Transcription activator AKTR-3, found in Alternaria alternata (Alternaria rot fungus).